The sequence spans 336 residues: MFRLDELVERLGGELLGDPATAVRRVATLEQAGEGDLAFLANPKYQSRLAACGASAVILAPAARDLTGLPRIVTADPYIYFARVAQLFNPPEAFVPGVHPAASVASPVPASVTIAAGASIDVDVELGEHVVIGPGCRIGRGARIGAGSRLNANVTIYHDCVLGRDCIVHAGAVIGADGFGFARERDGSWVKIPQVGRVVIGDDVEIGANTTIDRGALDDTVISGGVKLDNQIQIGHNVRIGAHTAIAGCVGIAGSTTIGARCMIGGQAGIIGHLEIVDDVVVSAGTLVTKSIRRPGVYTANLPVQGHAEWVKNFAHLRHLDALVDRIRALEERKAR.

His-236 serves as the catalytic Proton acceptor.

This sequence belongs to the transferase hexapeptide repeat family. LpxD subfamily. In terms of assembly, homotrimer.

It carries out the reaction a UDP-3-O-[(3R)-3-hydroxyacyl]-alpha-D-glucosamine + a (3R)-hydroxyacyl-[ACP] = a UDP-2-N,3-O-bis[(3R)-3-hydroxyacyl]-alpha-D-glucosamine + holo-[ACP] + H(+). Its pathway is bacterial outer membrane biogenesis; LPS lipid A biosynthesis. Catalyzes the N-acylation of UDP-3-O-acylglucosamine using 3-hydroxyacyl-ACP as the acyl donor. Is involved in the biosynthesis of lipid A, a phosphorylated glycolipid that anchors the lipopolysaccharide to the outer membrane of the cell. This Aromatoleum aromaticum (strain DSM 19018 / LMG 30748 / EbN1) (Azoarcus sp. (strain EbN1)) protein is UDP-3-O-acylglucosamine N-acyltransferase.